The chain runs to 177 residues: MSDIAKDKAARLLKKRGSIISLGSHDVKPRGSFSKTKDSVSTVSYIDEPGHHDEIQSPAILMENTYQIGPAKRFPVASVNNILKDVLTSYLQEEKYEAELCRQMTKTISEVIKARVKDLMIPRYKIIVLIYIGQLNDQSMRVGSRCIWDPANDTFSSYSFKNSSLFALANVYGVYYE.

This sequence belongs to the dynein light chain Tctex-type family.

In Xenopus laevis (African clawed frog), this protein is Dynein light chain Tctex-type 5-A (Dynlt5-a).